An 874-amino-acid chain; its full sequence is Alanine--tRNA ligase (874 aa).

The Zn(2+) site is built by H562, H566, C663, and H667.

This sequence belongs to the class-II aminoacyl-tRNA synthetase family. The cofactor is Zn(2+).

It localises to the cytoplasm. The catalysed reaction is tRNA(Ala) + L-alanine + ATP = L-alanyl-tRNA(Ala) + AMP + diphosphate. Functionally, catalyzes the attachment of alanine to tRNA(Ala) in a two-step reaction: alanine is first activated by ATP to form Ala-AMP and then transferred to the acceptor end of tRNA(Ala). Also edits incorrectly charged Ser-tRNA(Ala) and Gly-tRNA(Ala) via its editing domain. In Bordetella pertussis (strain Tohama I / ATCC BAA-589 / NCTC 13251), this protein is Alanine--tRNA ligase.